Here is an 886-residue protein sequence, read N- to C-terminus: Alanine--tRNA ligase (886 aa).

Zn(2+)-binding residues include His-564, His-568, Cys-666, and His-670.

Belongs to the class-II aminoacyl-tRNA synthetase family. Zn(2+) is required as a cofactor.

It localises to the cytoplasm. The enzyme catalyses tRNA(Ala) + L-alanine + ATP = L-alanyl-tRNA(Ala) + AMP + diphosphate. Its function is as follows. Catalyzes the attachment of alanine to tRNA(Ala) in a two-step reaction: alanine is first activated by ATP to form Ala-AMP and then transferred to the acceptor end of tRNA(Ala). Also edits incorrectly charged Ser-tRNA(Ala) and Gly-tRNA(Ala) via its editing domain. This chain is Alanine--tRNA ligase, found in Prochlorococcus marinus (strain MIT 9515).